Here is a 183-residue protein sequence, read N- to C-terminus: Capsid protein (183 aa).

The segment at 136–183 is disordered; the sequence is NAPILSTLPETTVVRRRGRSPRRRTPSPRRRRSESPRRRRSQSRESQC. A compositionally biased stretch (basic residues) spans 149-176; it reads VRRRGRSPRRRTPSPRRRRSESPRRRRS. Phosphoserine; by host is present on residues serine 155, serine 162, and serine 170. The stretch at 155-160 is one 1; half-length repeat; that stretch reads SPRRRT. The segment at 155–176 is 3 X 7 AA repeats of S-P-R-R-R-[PR]-S; sequence SPRRRTPSPRRRRSESPRRRRS. The short motif at 158–175 is the Bipartite nuclear localization signal element; it reads RRTPSPRRRRSESPRRRR. 2 repeat units span residues 162-168 and 170-176. Residues 177–183 form an RNA binding region; that stretch reads QSRESQC.

The protein belongs to the orthohepadnavirus core antigen family. As to quaternary structure, homodimerizes, then multimerizes. Interacts with cytosol exposed regions of viral L glycoprotein present in the reticulum-to-Golgi compartment. Interacts with human FLNB. Phosphorylated form interacts with host importin alpha; this interaction depends on the exposure of the NLS, which itself depends upon genome maturation and/or phosphorylation of the capsid protein. Interacts with host NUP153. Phosphorylated by host SRPK1, SRPK2, and maybe protein kinase C or GAPDH. Phosphorylation is critical for pregenomic RNA packaging. Protein kinase C phosphorylation is stimulated by HBx protein and may play a role in transport of the viral genome to the nucleus at the late step during the viral replication cycle.

Its subcellular location is the virion. It is found in the host cytoplasm. In terms of biological role, self assembles to form an icosahedral capsid. Most capsids appear to be large particles with an icosahedral symmetry of T=4 and consist of 240 copies of capsid protein, though a fraction forms smaller T=3 particles consisting of 180 capsid proteins. Entering capsids are transported along microtubules to the nucleus. Phosphorylation of the capsid is thought to induce exposure of nuclear localization signal in the C-terminal portion of the capsid protein that allows binding to the nuclear pore complex via the importin (karyopherin-) alpha and beta. Capsids are imported in intact form through the nuclear pore into the nuclear basket, where it probably binds NUP153. Only capsids that contain the mature viral genome can release the viral DNA and capsid protein into the nucleoplasm. Immature capsids get stuck in the basket. Capsids encapsulate the pre-genomic RNA and the P protein. Pre-genomic RNA is reverse-transcribed into DNA while the capsid is still in the cytoplasm. The capsid can then either be directed to the nucleus, providing more genomes for transcription, or bud through the endoplasmic reticulum to provide new virions. In Homo sapiens (Human), this protein is Capsid protein.